A 144-amino-acid polypeptide reads, in one-letter code: Acylphosphatase-like protein MJ1331 (144 aa).

The Acylphosphatase-like domain occupies 8-100 (TYELRIYGNV…FPNGLNKIST (93 aa)).

This is Acylphosphatase-like protein MJ1331 from Methanocaldococcus jannaschii (strain ATCC 43067 / DSM 2661 / JAL-1 / JCM 10045 / NBRC 100440) (Methanococcus jannaschii).